A 481-amino-acid chain; its full sequence is Cytochrome P450 monooygenase 2 (481 aa).

A helical membrane pass occupies residues Gly12–Ile32. Heme is bound at residue Cys418.

It belongs to the cytochrome P450 family. Heme is required as a cofactor.

Its subcellular location is the membrane. Its pathway is plant hormone biosynthesis; gibberellin biosynthesis. Functionally, gibberellin 20-oxidase; part of the gene cluster that mediates the biosynthesis of gibberellins (GAs), diterpenoids that may provide a selective advantage during infection of the preferred host plant, rice. Gibberellins (GAs) are diterpenoids and are synthesized via the mevalonate pathway. Biosynthesis of the major metabolite GA3 (gibberellic acid) from geranylgeranyl diphosphate (GGPP) requires 13 steps. The GGPP produced by the geranylgeranyl diphosphate synthase GGS2 is converted to ent-kaurene via ent-copalyldiphosphate in a two-step cyclization reaction performed by the bifunctional ent-copalyl diphosphate synthase/ent-kaurene synthase enzyme (CPS/KS). Ent-Kaurene is metabolized to GAs by a series of oxidation reactions catalyzed by cytochrome P450 monooxygenases. Cytochrome P450 monooxygenase P450-4 is an ent-kaurene oxidase that catalyzes the three oxidation steps between ent-kaurene and ent-kaurenoic acid. The highly multifunctional cytochrome P450 monooxygenase P450-1 then catalyzes four steps involving oxidation at two carbon atoms, in the main pathway from ent-kaurenoic acid to GA14 via GA12-aldehyde as well as producing kaurenolides and fujenoic acids as by-products. The cytochrome P450 monooxygenase P450-2 then converts GA14 to GA4 by removal of C-20. GA4 is further converted to GA7 by the GA4 desaturase DES via 1,2-desaturation before cytochrome P450 monooxygenase P450-3, a 13-hydroxylase, hydroxylates GA7 to GA3, the final product of the GA-biosynthetic pathway. In Gibberella fujikuroi (strain CBS 195.34 / IMI 58289 / NRRL A-6831) (Bakanae and foot rot disease fungus), this protein is Cytochrome P450 monooygenase 2.